The sequence spans 211 residues: Urease accessory protein UreG (211 aa).

12 to 19 contacts GTP; the sequence is GPVGAGKT.

Belongs to the SIMIBI class G3E GTPase family. UreG subfamily. In terms of assembly, homodimer. UreD, UreF and UreG form a complex that acts as a GTP-hydrolysis-dependent molecular chaperone, activating the urease apoprotein by helping to assemble the nickel containing metallocenter of UreC. The UreE protein probably delivers the nickel.

It is found in the cytoplasm. Facilitates the functional incorporation of the urease nickel metallocenter. This process requires GTP hydrolysis, probably effectuated by UreG. The protein is Urease accessory protein UreG of Paracoccus denitrificans (strain Pd 1222).